We begin with the raw amino-acid sequence, 348 residues long: Propane 2-monooxygenase, reductase component (348 aa).

Residues 5 to 95 enclose the 2Fe-2S ferredoxin-type domain; sequence HKINFEPVDI…DCTIELLNFD (91 aa). Residues Cys-39, Cys-44, Cys-47, and Cys-79 each contribute to the [2Fe-2S] cluster site. The 102-residue stretch at 105–206 folds into the FAD-binding FR-type domain; the sequence is IQDVRTEVLA…TGPYGSFTLK (102 aa).

It belongs to the bacterial ring-hydroxylating dioxygenase ferredoxin reductase family. As to quaternary structure, the propane 2-monooxygenase multicomponent enzyme system is composed of an electron transfer component and a monooxygenase component interacting with the effector protein MimD. The electron transfer component is composed of a reductase (MimB), and the monooxygenase component is formed by a large subunit (MimA) and a small subunit (MimC). Requires FAD as cofactor. [2Fe-2S] cluster is required as a cofactor.

In terms of biological role, reductase component of the propane 2-monooxygenase multicomponent enzyme system which is involved in the degradation of propane via the O2-dependent hydroxylation of propane. Reductase catalyzes the transfer of electrons from NADH or NADPH to monooxygenase. This Mycolicibacterium goodii (Mycobacterium goodii) protein is Propane 2-monooxygenase, reductase component.